A 123-amino-acid chain; its full sequence is Small ribosomal subunit protein uS12 (123 aa).

D89 carries the 3-methylthioaspartic acid modification. A disordered region spans residues 100–123; it reads GSLDTSGVKGRNQGRSKYGTKKPK. Over residues 111–123 the composition is skewed to basic residues; it reads NQGRSKYGTKKPK.

It belongs to the universal ribosomal protein uS12 family. Part of the 30S ribosomal subunit. Contacts proteins S8 and S17. May interact with IF1 in the 30S initiation complex.

Its function is as follows. With S4 and S5 plays an important role in translational accuracy. In terms of biological role, interacts with and stabilizes bases of the 16S rRNA that are involved in tRNA selection in the A site and with the mRNA backbone. Located at the interface of the 30S and 50S subunits, it traverses the body of the 30S subunit contacting proteins on the other side and probably holding the rRNA structure together. The combined cluster of proteins S8, S12 and S17 appears to hold together the shoulder and platform of the 30S subunit. The polypeptide is Small ribosomal subunit protein uS12 (Pseudomonas syringae pv. syringae (strain B728a)).